The chain runs to 485 residues: E3 ubiquitin-protein ligase TRIM68 (485 aa).

An RING-type zinc finger spans residues 16-61 (CPICMTFLREPMSIDCGHSFCHSCLSGLWEIPGESQNWGYTCPLCR). The B box-type zinc-finger motif lies at 93 to 134 (LKGDLCERHGEKLKMFCKEDVLIMCEACSQSPEHEAHSVVPM). Positions 98, 101, 120, and 126 each coordinate Zn(2+). Positions 207 to 239 (AEVAAALASLQREAAETMQKLELNHSELIQQSQ) form a coiled coil. Residues 285–481 (LKTDCRVLGL…NTAPLAICSL (197 aa)) enclose the B30.2/SPRY domain.

The protein belongs to the TRIM/RBCC family. Interacts with AR/androgen receptor (via ligand-binding domain). Interacts with KAT5/TIP60. Auto-ubiquitinated. In terms of tissue distribution, widely expressed. Expressed at high levels in prostate cancer cell lines. Up-regulation could be restricted to androgen-dependent cells.

Its subcellular location is the cytoplasm. The protein resides in the perinuclear region. It localises to the nucleus. The enzyme catalyses S-ubiquitinyl-[E2 ubiquitin-conjugating enzyme]-L-cysteine + [acceptor protein]-L-lysine = [E2 ubiquitin-conjugating enzyme]-L-cysteine + N(6)-ubiquitinyl-[acceptor protein]-L-lysine.. Its pathway is protein modification; protein ubiquitination. In terms of biological role, functions as a ubiquitin E3 ligase. Acts as a coactivator of androgen receptor (AR) depending on its ubiquitin ligase activity. The polypeptide is E3 ubiquitin-protein ligase TRIM68 (TRIM68) (Homo sapiens (Human)).